Reading from the N-terminus, the 355-residue chain is uncharacterized protein (355 aa).

Residues 1–61 form a disordered region; that stretch reads MNKKIEKNNN…PKRRGRRPKK (61 aa). The segment covering 18–37 has biased composition (polar residues); the sequence is YESNTTDNQLIMKKNANSGS.

This is an uncharacterized protein from Acanthamoeba polyphaga mimivirus (APMV).